The primary structure comprises 173 residues: CKLF-like MARVEL transmembrane domain-containing protein 8 (173 aa).

Residues 36–168 enclose the MARVEL domain; it reads FLRTLPGLLI…NTYFSFIAWR (133 aa). The next 4 helical transmembrane spans lie at 40–60, 70–90, 105–125, and 147–167; these read LPGL…TLIA, FGWV…FLII, TTVG…AAIV, and FFAF…FIAW.

This sequence belongs to the chemokine-like factor family.

It localises to the membrane. The protein is CKLF-like MARVEL transmembrane domain-containing protein 8 (CMTM8) of Bos taurus (Bovine).